A 234-amino-acid chain; its full sequence is Synaptogyrin-4 (234 aa).

Residues 18–169 (FLKRPKAITR…QAYLAFQELR (152 aa)) enclose the MARVEL domain. The next 4 helical transmembrane spans lie at 25–45 (ITRI…LTDG), 66–86 (CSIA…FLAL), 104–124 (LLDL…FCFL), and 145–165 (AAIT…YLAF). Positions 191 to 226 (SPPSAASPVNTPTTGPHGPSYASSSLSPYLSTPKAP) are disordered. The span at 209–221 (PSYASSSLSPYLS) shows a compositional bias: low complexity.

The protein belongs to the synaptogyrin family.

It is found in the membrane. This chain is Synaptogyrin-4 (SYNGR4), found in Bos taurus (Bovine).